The chain runs to 247 residues: Enolase-phosphatase E1 (247 aa).

This sequence belongs to the HAD-like hydrolase superfamily. MasA/MtnC family. As to quaternary structure, monomer. Mg(2+) is required as a cofactor.

The catalysed reaction is 5-methylsulfanyl-2,3-dioxopentyl phosphate + H2O = 1,2-dihydroxy-5-(methylsulfanyl)pent-1-en-3-one + phosphate. The protein operates within amino-acid biosynthesis; L-methionine biosynthesis via salvage pathway; L-methionine from S-methyl-5-thio-alpha-D-ribose 1-phosphate: step 3/6. It participates in amino-acid biosynthesis; L-methionine biosynthesis via salvage pathway; L-methionine from S-methyl-5-thio-alpha-D-ribose 1-phosphate: step 4/6. Functionally, bifunctional enzyme that catalyzes the enolization of 2,3-diketo-5-methylthiopentyl-1-phosphate (DK-MTP-1-P) into the intermediate 2-hydroxy-3-keto-5-methylthiopentenyl-1-phosphate (HK-MTPenyl-1-P), which is then dephosphorylated to form the acireductone 1,2-dihydroxy-3-keto-5-methylthiopentene (DHK-MTPene). This is Enolase-phosphatase E1 from Leptospira biflexa serovar Patoc (strain Patoc 1 / Ames).